The sequence spans 1183 residues: MAGQVVQYGRHRKRRNYARISEVLELPNLIEIQTKSYEWFLREGLIEMFRDISPIEDFTGNLSLEFVDYRLGEPKYDLEESKNRDATYAAPLRVKVRLIIKETGEVKEQEVFMGDFPLMTDTGTFVINGAERVIVSQLVRSPSVYFNEKIDKNGRENYDATIIPNRGAWLEYETDAKDVVYVRIDRTRKLPLTVLLRALGFSSDQEIVDLLGDNEYLRNTLEKDGTENTEQALLEIYERLRPGEPPTVENAKSLLYSRFFDPKRYDLASVGRYKTNKKLHLKHRLFNQKLAEPIVNTETGEIVVEEGTVLDRRKIDEIMDVLESNANSEVFELHGSVIDEPVEIQSIKVYVPNDDEGRTTTVIGNAFPDSEVKCITPADIIASMSYFFNLLSGIGYTDDIDHLGNRRLRSVGELLQNQFRIGLSRMERVVRERMSIQDTESITPQQLINIRPVIASIKEFFGSSQLSQFMDQANPLAELTHKRRLSALGPGGLTRERAQMEVRDVHYSHYGRMCPIETPEGPNIGLINSLSSYARVNEFGFIETPYRKVDLDTHAITDQIDYLTADEEDSYVVAQANSKLDENGRFMDDEVVCRFRGNNTVMAKEKMDYMDVSPKQVVSAATACIPFLENDDSNRALMGANMQRQAVPLMNPEAPFVGTGMEHVAARDSGAAITAKHRGRVEHVESNEILVRRLVEENGVEHEGELDRYPLAKFKRSNSGTCYNQRPIVAVGDVVEYNEILADGPSMELGEMALGRNVVVGFMTWDGYNYEDAVIMSERLVKDDVYTSIHIEEYESEVRDTKLGPEEITRDIPNVSESALKNLDDRGIVYIGAEVKDGDILVGKVTPKGVTELTAEERLLHAIFGEKAREVRDTLLRVPHGAGGIVLDVKVFNREEGDDTLSPGVNQLVRVYIVQKRKIHVGDKMCGRHGNKGVISKIVPEEDMPYLPDGRPIDIMLNPLGVPSRMNIGQVLELHLGMAAKNLGIHVASPVFDGANDDDVWSTIEEAGMARDGKTVLYDGRTGEPFDNRISVGVMYMLKLAHMVDDKLHARSTGPYSLVTQQPLGGKAQFGGQRFGEMEVWALEAYGAAYTLQEILTYKSDDTVGRVKTYEAIVKGENISRPSVPESFRVLMKELQSLGLDVKVMDEQDNEIEMTDVDDDDVVERKVDLQQNDAPETQKEVTD.

This sequence belongs to the RNA polymerase beta chain family. In terms of assembly, the RNAP catalytic core consists of 2 alpha, 1 beta, 1 beta' and 1 omega subunit. When a sigma factor is associated with the core the holoenzyme is formed, which can initiate transcription.

It carries out the reaction RNA(n) + a ribonucleoside 5'-triphosphate = RNA(n+1) + diphosphate. Its function is as follows. DNA-dependent RNA polymerase catalyzes the transcription of DNA into RNA using the four ribonucleoside triphosphates as substrates. This chain is DNA-directed RNA polymerase subunit beta, found in Staphylococcus aureus (strain COL).